A 352-amino-acid polypeptide reads, in one-letter code: C-C chemokine receptor type 5 (352 aa).

Residues 1-30 (MDYQVSSPTYDIDYYTSEPCQKINVKQIAA) are Extracellular-facing. Position 3 is a sulfotyrosine (Tyr-3). O-linked (GalNAc...) serine glycans are attached at residues Ser-6 and Ser-7. Residues Tyr-10, Tyr-14, and Tyr-15 each carry the sulfotyrosine modification. Disulfide bonds link Cys-20–Cys-269 and Cys-101–Cys-178. Residues 31–58 (RLLPPLYSLVFIFGFVGNILVVLILINC) form a helical membrane-spanning segment. Residues 59–68 (KRLKSMTDIY) are Cytoplasmic-facing. A helical membrane pass occupies residues 69 to 89 (LLNLAISDLLFLLTVPFWAHY). At 90-102 (AAAQWDFGNTMCQ) the chain is on the extracellular side. A helical transmembrane segment spans residues 103 to 124 (LLTGLYFIGFFSGIFFIILLTI). Over 125 to 141 (DRYLAIVHAVFALKART) the chain is Cytoplasmic. Residues 142-166 (VTFGVVTSVITWVVAVFASLPGIIF) form a helical membrane-spanning segment. Residues 167–198 (TRSQREGLHYTCSSHFPYSQYQFWKNFQTLKI) lie on the Extracellular side of the membrane. Residues 199-218 (VILGLVLPLLVMVICYSGIL) traverse the membrane as a helical segment. Topologically, residues 219-235 (KTLLRCRNEKKRHRAVR) are cytoplasmic. A helical transmembrane segment spans residues 236-260 (LIFTIMIVYFLFWAPYNIVLLLNTF). Residues 261-277 (QEFFGLNNCSSSNRLDQ) are Extracellular-facing. A helical transmembrane segment spans residues 278-301 (AMQVTETLGMTHCCINPIIYAFVG). Residues 302 to 352 (EKFRNYLLVFFQKHIAKRFCKCCSIFQQEASERASSVYTRSTGEQEISVGL) lie on the Cytoplasmic side of the membrane. 3 S-palmitoyl cysteine lipidation sites follow: Cys-321, Cys-323, and Cys-324. A phosphoserine; by BARK1 mark is found at Ser-336, Ser-337, Ser-342, and Ser-349.

This sequence belongs to the G-protein coupled receptor 1 family. As to quaternary structure, interacts with PRAF2. Efficient ligand binding to CCL3/MIP-1alpha and CCL4/MIP-1beta requires sulfation, O-glycosylation and sialic acid modifications. Glycosylation on Ser-6 is required for efficient binding of CCL4. Interacts with GRK2. Interacts with ARRB1 and ARRB2. Interacts with CNIH4. Interacts with S100A4; this interaction stimulates T-lymphocyte chemotaxis. Sulfated on at least 2 of the N-terminal tyrosines. Sulfation is required for efficient binding of the chemokines, CCL3 and CCL4. Post-translationally, palmitoylation in the C-terminal is important for cell surface expression. In terms of processing, phosphorylation on serine residues in the C-terminal is stimulated by binding CC chemokines especially by APO-RANTES. O-glycosylated, but not N-glycosylated. Ser-6 appears to be the major site even if Ser-7 may be also O-glycosylated. Also sialylated glycans present which contribute to chemokine binding. Thr-16 and Ser-17 may also be glycosylated and, if so, with small moieties such as a T-antigen.

It localises to the cell membrane. Functionally, receptor for a number of inflammatory CC-chemokines including CCL3/MIP-1-alpha, CCL4/MIP-1-beta and RANTES and subsequently transduces a signal by increasing the intracellular calcium ion level. May play a role in the control of granulocytic lineage proliferation or differentiation. Participates in T-lymphocyte migration to the infection site by acting as a chemotactic receptor. The sequence is that of C-C chemokine receptor type 5 (CCR5) from Cercocebus galeritus (Tana river mangabey).